The primary structure comprises 201 residues: 3-isopropylmalate dehydratase small subunit (201 aa).

Belongs to the LeuD family. LeuD type 1 subfamily. As to quaternary structure, heterodimer of LeuC and LeuD.

It catalyses the reaction (2R,3S)-3-isopropylmalate = (2S)-2-isopropylmalate. It functions in the pathway amino-acid biosynthesis; L-leucine biosynthesis; L-leucine from 3-methyl-2-oxobutanoate: step 2/4. Catalyzes the isomerization between 2-isopropylmalate and 3-isopropylmalate, via the formation of 2-isopropylmaleate. The protein is 3-isopropylmalate dehydratase small subunit of Allorhizobium ampelinum (strain ATCC BAA-846 / DSM 112012 / S4) (Agrobacterium vitis (strain S4)).